The chain runs to 442 residues: Chromosomal replication initiator protein DnaA (442 aa).

The interval 1-75 (MDAWPRCLER…GNGEVALAVG (75 aa)) is domain I, interacts with DnaA modulators. The tract at residues 75-104 (GSRPRAPEPAPAPVAATIAPQAAPIAPFAG) is domain II. The tract at residues 105-322 (NLDSHYTFAN…GALNTLVARA (218 aa)) is domain III, AAA+ region. Positions 150, 152, 153, and 154 each coordinate ATP. The domain IV, binds dsDNA stretch occupies residues 323–442 (NFTGRSITVE…WEKLIRKLSE (120 aa)).

This sequence belongs to the DnaA family. In terms of assembly, oligomerizes as a right-handed, spiral filament on DNA at oriC.

The protein localises to the cytoplasm. Plays an essential role in the initiation and regulation of chromosomal replication. ATP-DnaA binds to the origin of replication (oriC) to initiate formation of the DNA replication initiation complex once per cell cycle. Binds the DnaA box (a 9 base pair repeat at the origin) and separates the double-stranded (ds)DNA. Forms a right-handed helical filament on oriC DNA; dsDNA binds to the exterior of the filament while single-stranded (ss)DNA is stabiized in the filament's interior. The ATP-DnaA-oriC complex binds and stabilizes one strand of the AT-rich DNA unwinding element (DUE), permitting loading of DNA polymerase. After initiation quickly degrades to an ADP-DnaA complex that is not apt for DNA replication. Binds acidic phospholipids. The protein is Chromosomal replication initiator protein DnaA of Xanthomonas oryzae pv. oryzae (strain PXO99A).